Reading from the N-terminus, the 757-residue chain is E3 ubiquitin-protein ligase RNF12-B (757 aa).

Residues 1–10 (MESADSTGKG) show a composition bias toward polar residues. Disordered regions lie at residues 1-29 (MESADSTGKGSTEQSESQRQSQMDRLDRE), 68-519 (LQQI…TYES), and 619-652 (EPAEPVAPVESDEGSNVATSATRREGRNSRGGVT). Over residues 11–21 (STEQSESQRQS) the composition is skewed to low complexity. 2 stretches are compositionally biased toward polar residues: residues 110–138 (SVRQTGNTTRSGQRGNQSWRAVSRTNPNS) and 147–163 (INVNRTSGTASMPSLDQ). Repeat copies occupy residues 197–202 (PESVDE), 203–208 (PVSVAE), 209–214 (PVSVAE), 215–220 (PVSVAE), 221–226 (PESVAE), 227–232 (PESVAA), 237–242 (PESVPE), 243–248 (PESVPE), 249–254 (PESVPE), 255–260 (PESVPE), 261–266 (PESVPE), 267–272 (PESVPE), 273–278 (PESVPE), 279–284 (PESVPE), 285–290 (PESVPE), 291–296 (PESVPE), 297–302 (PESVPE), 303–308 (PESVPE), 309–314 (PESIAE), 315–320 (PESVPV), and 321–326 (PESVPV). Residues 197–326 (PESVDEPVSV…SVPVPESVPV (130 aa)) are 21 X 6 AA approximate repeats of P-[EV]-S-V-[PA]-[EV]. Residues 202–237 (EPVSVAEPVSVAEPVSVAEPESVAEPESVAASVPVP) are compositionally biased toward low complexity. Over residues 245–313 (SVPEPESVPE…ESVPEPESIA (69 aa)) the composition is skewed to acidic residues. Residues 314-327 (EPESVPVPESVPVA) show a composition bias toward low complexity. The segment covering 352 to 367 (RSPDQRRTRARTDRSR) has biased composition (basic and acidic residues). Positions 383-392 (HSSSQTVDAS) are enriched in polar residues. The span at 408 to 424 (SSQVHSSSSNETEGSSR) shows a compositional bias: low complexity. Positions 428–452 (HITARQQALGTEGQSQSTVHLSNPE) are enriched in polar residues. Residues 453 to 466 (SRSSSQTPQTDSPS) are compositionally biased toward low complexity. Polar residues predominate over residues 467–476 (NAETTGTGQR). Over residues 490-500 (RPGDYRQRDSI) the composition is skewed to basic and acidic residues. Residues 501-517 (ANRTRSRSQTPNNTVTY) show a composition bias toward polar residues. An RING-type; atypical zinc finger spans residues 703–744 (CSVCITEYTEGNKLRKLPCSHEYHIHCIDRWLSENSTCPICR). Residues 754–757 (ESIV) carry the PDZ-binding motif.

The protein belongs to the RNF12 family. Forms homodimers through the C-terminal region. The N-terminus interacts with the homeobox of LIM/homeobox factor lhx1/lim1, with lhx3/lim3 and lhx5/lim5, and with the N-terminus of ldb1. In terms of tissue distribution, shows overlapping expression with lhx1/lim1 and ldb1 in the gastrula mesoderm, and expression overlaps with ldb1 throughout early embryogenesis. After gastrulation, expression is gradually restricted to tissues originated from the ectoderm, the neuroectoderm, neural crest and epidermis, and subsequently to the neural tube as well as the head and tailbud region.

The protein localises to the nucleus. It carries out the reaction S-ubiquitinyl-[E2 ubiquitin-conjugating enzyme]-L-cysteine + [acceptor protein]-L-lysine = [E2 ubiquitin-conjugating enzyme]-L-cysteine + N(6)-ubiquitinyl-[acceptor protein]-L-lysine.. The protein operates within protein modification; protein ubiquitination. Acts as an E3 ubiquitin-protein ligase specific for ldb1, mediating ubiquitination and proteasome-dependent degradation of excess ldb1 in a RING-dependent manner. Does not degrade ldb1 bound to lhx1/lim1, nor lim1 itself and thus contributes to the establishment of proper ldb1-lhx1/lim1 stoichiometry and the formation of a ldb1-lhx1/lim1 complex. Interferes with Spemann organizer function and suppresses secondary axis formation induced by ldb1 and lhx1/lim1. The protein is E3 ubiquitin-protein ligase RNF12-B (rnf12-b) of Xenopus laevis (African clawed frog).